We begin with the raw amino-acid sequence, 359 residues long: 3-dehydroquinate synthase (359 aa).

NAD(+) contacts are provided by residues 106–110, 130–131, Lys143, and Lys152; these read GVVGD and TS. The Zn(2+) site is built by Glu185, His246, and His262.

Belongs to the sugar phosphate cyclases superfamily. Dehydroquinate synthase family. NAD(+) serves as cofactor. It depends on Co(2+) as a cofactor. Requires Zn(2+) as cofactor.

The protein resides in the cytoplasm. It carries out the reaction 7-phospho-2-dehydro-3-deoxy-D-arabino-heptonate = 3-dehydroquinate + phosphate. Its pathway is metabolic intermediate biosynthesis; chorismate biosynthesis; chorismate from D-erythrose 4-phosphate and phosphoenolpyruvate: step 2/7. Functionally, catalyzes the conversion of 3-deoxy-D-arabino-heptulosonate 7-phosphate (DAHP) to dehydroquinate (DHQ). The sequence is that of 3-dehydroquinate synthase from Lactiplantibacillus plantarum (strain ATCC BAA-793 / NCIMB 8826 / WCFS1) (Lactobacillus plantarum).